Here is a 410-residue protein sequence, read N- to C-terminus: Protein LTV1 homolog (410 aa).

Disordered regions lie at residues 142–165 (VYRS…DEMY) and 325–378 (EMDI…ARKL). Acidic residues-rich tracts occupy residues 151–165 (DSEE…DEMY) and 325–345 (EMDI…DDDK). Over residues 357-366 (PKNETPEQRS) the composition is skewed to basic and acidic residues. Residues 363–389 (EQRSLRKKAVKEARKLRRVEKKANKTM) are a coiled coil. The segment covering 367–378 (LRKKAVKEARKL) has biased composition (basic residues).

The protein belongs to the LTV1 family.

The protein is Protein LTV1 homolog of Caenorhabditis elegans.